A 220-amino-acid polypeptide reads, in one-letter code: Adenylate kinase (220 aa).

10–15 (GAGKGT) contributes to the ATP binding site. The tract at residues 30-59 (STGDMLRAAVKAGTPLGVEAKTYMDEGKLV) is NMP. AMP is bound by residues T31, R36, 57–59 (KLV), 85–88 (GFPR), and Q92. An LID region spans residues 122–159 (GRRTHPASGRTYHVKFNPPKVEGKDDVTGEPLVQRDDD). Residues R123 and 132 to 133 (TY) contribute to the ATP site. Residues R156 and R167 each coordinate AMP. G206 is a binding site for ATP.

Belongs to the adenylate kinase family. In terms of assembly, monomer.

Its subcellular location is the cytoplasm. The enzyme catalyses AMP + ATP = 2 ADP. The protein operates within purine metabolism; AMP biosynthesis via salvage pathway; AMP from ADP: step 1/1. Its function is as follows. Catalyzes the reversible transfer of the terminal phosphate group between ATP and AMP. Plays an important role in cellular energy homeostasis and in adenine nucleotide metabolism. This is Adenylate kinase from Burkholderia mallei (strain NCTC 10247).